A 360-amino-acid polypeptide reads, in one-letter code: Peptide chain release factor 1 (360 aa).

N5-methylglutamine is present on Gln235.

Belongs to the prokaryotic/mitochondrial release factor family. Methylated by PrmC. Methylation increases the termination efficiency of RF1.

The protein localises to the cytoplasm. Functionally, peptide chain release factor 1 directs the termination of translation in response to the peptide chain termination codons UAG and UAA. In Cupriavidus pinatubonensis (strain JMP 134 / LMG 1197) (Cupriavidus necator (strain JMP 134)), this protein is Peptide chain release factor 1.